Reading from the N-terminus, the 167-residue chain is Fimbrial adapter PapF (167 aa).

Positions 1-18 are cleaved as a signal peptide; that stretch reads MIRLSLFISLLLTSVAVL.

It localises to the secreted. The protein localises to the fimbrium. Its function is as follows. Adapter that links the PapG adhesin to the distal end of the tip fibrillum. PapF is required for the correct presentation of the adhesin at the distal end of the tip fibrillum. Pili are polar filaments radiating from the surface of the bacterium to a length of 0.5-1.5 micrometers and numbering 100-300 per cell, and enable bacteria to colonize the epithelium of specific host organs. This Escherichia coli protein is Fimbrial adapter PapF (papF).